A 521-amino-acid polypeptide reads, in one-letter code: Protein disulfide-isomerase A5 (521 aa).

Positions 1–25 (MARVVPAWLLLPLAVWVVLPTWLSS) are cleaved as a signal peptide. Thioredoxin domains follow at residues 136 to 263 (FLKD…NPQP), 274 to 386 (ADEG…NPES), and 387 to 508 (PPPP…TLRE). 3 cysteine pairs are disulfide-bonded: Cys184–Cys187, Cys307–Cys310, and Cys428–Cys431. The Prevents secretion from ER signature appears at 518 to 521 (KEEL).

This sequence belongs to the protein disulfide isomerase family.

Its subcellular location is the endoplasmic reticulum lumen. The catalysed reaction is Catalyzes the rearrangement of -S-S- bonds in proteins.. The chain is Protein disulfide-isomerase A5 (PDIA5) from Bos taurus (Bovine).